The primary structure comprises 189 residues: MAKQRVINIRGTSGSGKSTLIRRLVELYPEKEPVHVPDRKQPLFYKLRGDGLLPLSLLGHYETACGGCDTIPSMDRIYELVRERLAEGDSVLYEGLLISAEVNRAVALHTDGFDLTVVRLNTPLELCVDSVNQRRWAKNPDKPGVNPKNTEAKFKQTLATCKKLDAAGIPVVEADRDGAFHAIKQLLEA.

This sequence belongs to the thymidylate kinase family. 5-hmdU DNA kinase subfamily.

The catalysed reaction is 5-hydroxymethyl-dUMP in DNA + ATP = 5-phosphomethyl-dUMP in DNA + ADP + H(+). In terms of biological role, phosphorylates 5-hydroxymethyluracil (5hmdU) into 5-phosphomethyl-2'-deoxyuridine (5- PmdU) on DNA as a step in the pathway leading to thymidine hypermodifications in the viral genome. The phosphate is added internally to the DNA polymer. As a final result of the pathway of hypermodification, 5-AcNmdU substitutes for a subset of thymidines in the viral DNA. These modifications probably prevent degradation of viral genome by the host restriction-modification antiviral defense system. In Pseudomonas phage PaMx11, this protein is 5-hmdU DNA kinase.